A 93-amino-acid chain; its full sequence is Integration host factor subunit beta (93 aa).

This sequence belongs to the bacterial histone-like protein family. As to quaternary structure, heterodimer of an alpha and a beta chain.

Its function is as follows. This protein is one of the two subunits of integration host factor, a specific DNA-binding protein that functions in genetic recombination as well as in transcriptional and translational control. In Cereibacter sphaeroides (strain ATCC 17023 / DSM 158 / JCM 6121 / CCUG 31486 / LMG 2827 / NBRC 12203 / NCIMB 8253 / ATH 2.4.1.) (Rhodobacter sphaeroides), this protein is Integration host factor subunit beta (ihfB).